A 268-amino-acid chain; its full sequence is Undecaprenyl-diphosphatase (268 aa).

7 consecutive transmembrane segments (helical) span residues 47 to 67 (FTVLIQPGAILAIVVIYFAKL), 83 to 103 (FVIGVLAAFLPAVIVGLIAGK), 109 to 129 (LFNPWVVCFSLIVGGAVLMWV), 144 to 164 (FPLPMYVWIGIAQCVAMIPGV), 184 to 204 (AAEFSFFLAIPTMTGAFAYDF), 218 to 238 (TVAIGFVVSFVTAIIVVKAFL), and 246 to 266 (FTFFAWWRVIVGTLGLIALAL).

This sequence belongs to the UppP family.

It is found in the cell inner membrane. The catalysed reaction is di-trans,octa-cis-undecaprenyl diphosphate + H2O = di-trans,octa-cis-undecaprenyl phosphate + phosphate + H(+). Functionally, catalyzes the dephosphorylation of undecaprenyl diphosphate (UPP). Confers resistance to bacitracin. This Nitrobacter winogradskyi (strain ATCC 25391 / DSM 10237 / CIP 104748 / NCIMB 11846 / Nb-255) protein is Undecaprenyl-diphosphatase.